A 447-amino-acid chain; its full sequence is MKTPKVGFVSLGCPKALVDSERILTQLKTEGYQVASDYDGADLVVVNTCGFIESAVQESLDAIGEAMSENGRVIVTGCLGKDEDKIRQMHPNVLKVTGAAAYQDVMEAVHEYVPAPPKHNPFIDLVPEQGIRLTPKHYAYLKISEGCNHRCTFCIIPSMRGDLVSRPVGSVLEEAAALKRAGVKEILVISQDTSAYGVDTKYKLDFWNGQPVKTKFFDMCEALGQLGIWVRLHYVYPYPHVDAVIDLMAQGKILPYLDIPFQHASPRVLKLMKRPAHSENTLEKIKLWREKCPNLVIRSTFVVGFPGETEEDFQILLDWLVEAQLDRVGCFTYSPVEGATANDLPDHVPEEIKQERYERFMQVQQQISAAKLQKRIGQTMTVLVDSLEDEYPVAVARSYADAPEIDGNVFVEDIDKSTIQPGDMLEVEITDADEYDLFAKLIKIKSV.

Residues 4-114 (PKVGFVSLGC…VMEAVHEYVP (111 aa)) form the MTTase N-terminal domain. [4Fe-4S] cluster contacts are provided by cysteine 13, cysteine 49, cysteine 78, cysteine 147, cysteine 151, and cysteine 154. Residues 133-370 (LTPKHYAYLK…MQVQQQISAA (238 aa)) form the Radical SAM core domain. One can recognise a TRAM domain in the interval 373–443 (QKRIGQTMTV…EYDLFAKLIK (71 aa)).

It belongs to the methylthiotransferase family. RimO subfamily. Requires [4Fe-4S] cluster as cofactor.

The protein localises to the cytoplasm. It carries out the reaction L-aspartate(89)-[ribosomal protein uS12]-hydrogen + (sulfur carrier)-SH + AH2 + 2 S-adenosyl-L-methionine = 3-methylsulfanyl-L-aspartate(89)-[ribosomal protein uS12]-hydrogen + (sulfur carrier)-H + 5'-deoxyadenosine + L-methionine + A + S-adenosyl-L-homocysteine + 2 H(+). Its function is as follows. Catalyzes the methylthiolation of an aspartic acid residue of ribosomal protein uS12. This is Ribosomal protein uS12 methylthiotransferase RimO from Acinetobacter baumannii (strain AB307-0294).